Here is a 375-residue protein sequence, read N- to C-terminus: MNLSKLKFGSTIGIIGGGQLGKMMAQSAQQMGYKVIVLDPNSSCPCQYVANEFINAAYDDQIALDRLGALSDVITYEFENISANQLQALASKYNIPQGYQAIQLLQDRLTEKQTLQDSGSNIAPFLQLTDYDDLVKAVDSIGYPFIVKTRFGGYDGKGQVLVKDATHLDEARQLIQAQECVAEQYLNLSKEVSLTVTIGTNNQITYFPLQENEHQNQILFKTIVPARVQDNKEQEARNEVNKIIKAIHFIGTFTVEFFIDQQNQLYVNEIAPRPHNSGHYSIEACEYSQFDTHIKAITGQQLPQQVTLLKPAIMMNLLGRDLDLLEDQFAEHPEWHVHIYGKNERKFNRKMGHLTVLTNDINETEQKLLKQFEGR.

ATP contacts are provided by residues Arg-108, Lys-148, 153–159, 183–186, Glu-191, His-214, and 268–269; these read GYDGKGQ, EQYL, and NE. An ATP-grasp domain is found at 112–298; it reads KQTLQDSGSN…QFDTHIKAIT (187 aa).

It belongs to the PurK/PurT family. In terms of assembly, homodimer.

It carries out the reaction 5-amino-1-(5-phospho-beta-D-ribosyl)imidazole + hydrogencarbonate + ATP = 5-carboxyamino-1-(5-phospho-D-ribosyl)imidazole + ADP + phosphate + 2 H(+). The protein operates within purine metabolism; IMP biosynthesis via de novo pathway; 5-amino-1-(5-phospho-D-ribosyl)imidazole-4-carboxylate from 5-amino-1-(5-phospho-D-ribosyl)imidazole (N5-CAIR route): step 1/2. Catalyzes the ATP-dependent conversion of 5-aminoimidazole ribonucleotide (AIR) and HCO(3)(-) to N5-carboxyaminoimidazole ribonucleotide (N5-CAIR). In Staphylococcus saprophyticus subsp. saprophyticus (strain ATCC 15305 / DSM 20229 / NCIMB 8711 / NCTC 7292 / S-41), this protein is N5-carboxyaminoimidazole ribonucleotide synthase.